A 175-amino-acid chain; its full sequence is Adenine phosphoribosyltransferase (175 aa).

The protein belongs to the purine/pyrimidine phosphoribosyltransferase family. As to quaternary structure, homodimer.

It is found in the cytoplasm. The enzyme catalyses AMP + diphosphate = 5-phospho-alpha-D-ribose 1-diphosphate + adenine. It functions in the pathway purine metabolism; AMP biosynthesis via salvage pathway; AMP from adenine: step 1/1. Its function is as follows. Catalyzes a salvage reaction resulting in the formation of AMP, that is energically less costly than de novo synthesis. The chain is Adenine phosphoribosyltransferase from Francisella tularensis subsp. holarctica (strain FTNF002-00 / FTA).